Reading from the N-terminus, the 117-residue chain is Fluoride-specific ion channel FluC 2 (117 aa).

Transmembrane regions (helical) follow at residues 1–21 (MISI…RSAI) and 46–66 (FLIG…AFFV). Residues glycine 71 and threonine 74 each coordinate Na(+). A helical transmembrane segment spans residues 95-115 (LFLNYSLLQFIIGFIACYIGY).

This sequence belongs to the fluoride channel Fluc/FEX (TC 1.A.43) family.

The protein resides in the cell membrane. It carries out the reaction fluoride(in) = fluoride(out). Its activity is regulated as follows. Na(+) is not transported, but it plays an essential structural role and its presence is essential for fluoride channel function. Its function is as follows. Fluoride-specific ion channel. Important for reducing fluoride concentration in the cell, thus reducing its toxicity. This chain is Fluoride-specific ion channel FluC 2, found in Staphylococcus aureus (strain Mu50 / ATCC 700699).